The following is a 325-amino-acid chain: Nod factor export ATP-binding protein I (325 aa).

The ABC transporter domain occupies 27–257 (LELRKVRKQY…QIGCDVVEVY (231 aa)). 59-66 (GPNGAGKT) provides a ligand contact to ATP.

This sequence belongs to the ABC transporter superfamily. Lipooligosaccharide exporter (TC 3.A.1.102) family. As to quaternary structure, the complex is composed of two ATP-binding proteins (NodI) and two transmembrane proteins (NodJ).

It localises to the cell inner membrane. Functionally, part of the ABC transporter complex NodIJ involved in the export of the nodulation factors (Nod factors), the bacterial signal molecules that induce symbiosis and subsequent nodulation induction. Nod factors are LCO (lipo-chitin oligosaccharide), a modified beta-1,4-linked N-acetylglucosamine oligosaccharide. This subunit is responsible for energy coupling to the transport system. In Cupriavidus pinatubonensis (strain JMP 134 / LMG 1197) (Cupriavidus necator (strain JMP 134)), this protein is Nod factor export ATP-binding protein I.